The sequence spans 183 residues: uncharacterized protein (183 aa).

Lys-21 is covalently cross-linked (Glycyl lysine isopeptide (Lys-Gly) (interchain with G-Cter in ubiquitin)). Disordered regions lie at residues 24–111 and 160–183; these read NTTT…QNDN and PQSILDRSRTLPPSNASNTTTRRP. The span at 99-108 shows a compositional bias: low complexity; sequence QQQQQQQQQQ. Polar residues predominate over residues 170–183; the sequence is LPPSNASNTTTRRP.

The protein localises to the cytoplasm. This is an uncharacterized protein from Saccharomyces cerevisiae (strain ATCC 204508 / S288c) (Baker's yeast).